Consider the following 213-residue polypeptide: Peptide methionine sulfoxide reductase MsrA (213 aa).

Cysteine 53 is a catalytic residue.

It belongs to the MsrA Met sulfoxide reductase family.

It catalyses the reaction L-methionyl-[protein] + [thioredoxin]-disulfide + H2O = L-methionyl-(S)-S-oxide-[protein] + [thioredoxin]-dithiol. The catalysed reaction is [thioredoxin]-disulfide + L-methionine + H2O = L-methionine (S)-S-oxide + [thioredoxin]-dithiol. Functionally, has an important function as a repair enzyme for proteins that have been inactivated by oxidation. Catalyzes the reversible oxidation-reduction of methionine sulfoxide in proteins to methionine. This chain is Peptide methionine sulfoxide reductase MsrA, found in Serratia proteamaculans (strain 568).